Reading from the N-terminus, the 971-residue chain is UPF0182 protein CMS1887 (971 aa).

The next 7 membrane-spanning stretches (helical) occupy residues 16-36 (LAIT…FAGF), 56-76 (WGAG…PVFV), 108-128 (LAMF…ASSG), 161-181 (FYHA…LGVL), 205-225 (IQIA…IWLD), 255-275 (TILA…AAIG), and 281-301 (IIGT…YPAI). Residues 687–702 (QDLWTTPNDPTATTEA) show a composition bias toward polar residues. 2 disordered regions span residues 687–706 (QDLW…GTPA) and 874–924 (GATA…AQDV). Composition is skewed to low complexity over residues 884 to 900 (PTTP…TDGA) and 907 to 921 (STPT…AAPA).

It belongs to the UPF0182 family.

The protein resides in the cell membrane. The polypeptide is UPF0182 protein CMS1887 (Clavibacter sepedonicus (Clavibacter michiganensis subsp. sepedonicus)).